The following is a 100-amino-acid chain: UPF0213 protein YhbQ (100 aa).

The GIY-YIG domain maps to 2-77 (TPWYLYLIRT…KQLTKRQKER (76 aa)).

It belongs to the UPF0213 family.

The chain is UPF0213 protein YhbQ from Escherichia coli O8 (strain IAI1).